The chain runs to 101 residues: Small ribosomal subunit protein uS14 (101 aa).

The protein belongs to the universal ribosomal protein uS14 family. As to quaternary structure, part of the 30S ribosomal subunit. Contacts proteins S3 and S10.

Binds 16S rRNA, required for the assembly of 30S particles and may also be responsible for determining the conformation of the 16S rRNA at the A site. The chain is Small ribosomal subunit protein uS14 from Dechloromonas aromatica (strain RCB).